Here is a 182-residue protein sequence, read N- to C-terminus: Isopentenyl-diphosphate Delta-isomerase (182 aa).

Positions 25 and 32 each coordinate Mn(2+). One can recognise a Nudix hydrolase domain in the interval 30 to 164; sequence LLHLAFSSWL…PWAFSPWMVM (135 aa). The active site involves Cys67. His69 lines the Mn(2+) pocket. Glu87 is a binding site for Mg(2+). Residues Glu114 and Glu116 each coordinate Mn(2+). Glu116 is a catalytic residue.

Belongs to the IPP isomerase type 1 family. As to quaternary structure, homodimer. It depends on Mg(2+) as a cofactor. Mn(2+) serves as cofactor.

The protein localises to the cytoplasm. It carries out the reaction isopentenyl diphosphate = dimethylallyl diphosphate. Its pathway is isoprenoid biosynthesis; dimethylallyl diphosphate biosynthesis; dimethylallyl diphosphate from isopentenyl diphosphate: step 1/1. In terms of biological role, catalyzes the 1,3-allylic rearrangement of the homoallylic substrate isopentenyl (IPP) to its highly electrophilic allylic isomer, dimethylallyl diphosphate (DMAPP). The protein is Isopentenyl-diphosphate Delta-isomerase of Escherichia coli (strain SMS-3-5 / SECEC).